Reading from the N-terminus, the 411-residue chain is Bifunctional protein GlmU (411 aa).

Residues 1 to 204 (MDAIILCAGK…IGKLHGVELN (204 aa)) are pyrophosphorylase. UTP is bound by residues 6-9 (LCAG), Gln-74, and Gly-79. Positions 80, 130, 142, and 158 each coordinate N-acetyl-alpha-D-glucosamine 1-phosphate. A linker region spans residues 205 to 224 (GYWNDIGHPWDVLSANSHFL). The tract at residues 225–411 (NKIISKISGK…DELVITKKRN (187 aa)) is N-acetyltransferase. His-308 functions as the Proton acceptor in the catalytic mechanism. Acetyl-CoA is bound by residues Ala-384 and Lys-401.

The protein in the N-terminal section; belongs to the N-acetylglucosamine-1-phosphate uridyltransferase family. In the C-terminal section; belongs to the transferase hexapeptide repeat family.

It carries out the reaction N-acetyl-alpha-D-glucosamine 1-phosphate + UTP + H(+) = UDP-N-acetyl-alpha-D-glucosamine + diphosphate. The enzyme catalyses alpha-D-glucosamine 1-phosphate + acetyl-CoA = N-acetyl-alpha-D-glucosamine 1-phosphate + CoA + H(+). It functions in the pathway nucleotide-sugar biosynthesis; UDP-N-acetyl-alpha-D-glucosamine biosynthesis; N-acetyl-alpha-D-glucosamine 1-phosphate from alpha-D-glucosamine 6-phosphate (route II): step 2/2. It participates in nucleotide-sugar biosynthesis; UDP-N-acetyl-alpha-D-glucosamine biosynthesis; UDP-N-acetyl-alpha-D-glucosamine from N-acetyl-alpha-D-glucosamine 1-phosphate: step 1/1. Catalyzes the last two sequential reactions in the de novo biosynthetic pathway for UDP-N-acetyl-glucosamine (UDP-GlcNAc). Responsible for the acetylation of GlcN-1-P to GlcNAc-1-P, and for the uridyl transfer from UTP to GlcNAc-1-P, to produce UDP-GlcNAc and pyrophosphate. The protein is Bifunctional protein GlmU of Methanococcus maripaludis (strain C5 / ATCC BAA-1333).